A 365-amino-acid chain; its full sequence is Sulfate/thiosulfate import ATP-binding protein CysA (365 aa).

One can recognise an ABC transporter domain in the interval 3-237 (IEIANIKKSF…PATRFVLEFM (235 aa)). 35–42 (GPSGSGKT) is an ATP binding site.

Belongs to the ABC transporter superfamily. Sulfate/tungstate importer (TC 3.A.1.6) family. The complex is composed of two ATP-binding proteins (CysA), two transmembrane proteins (CysT and CysW) and a solute-binding protein (CysP).

Its subcellular location is the cell inner membrane. It catalyses the reaction sulfate(out) + ATP + H2O = sulfate(in) + ADP + phosphate + H(+). The enzyme catalyses thiosulfate(out) + ATP + H2O = thiosulfate(in) + ADP + phosphate + H(+). Part of the ABC transporter complex CysAWTP involved in sulfate/thiosulfate import. Responsible for energy coupling to the transport system. This is Sulfate/thiosulfate import ATP-binding protein CysA from Escherichia coli (strain K12).